The chain runs to 268 residues: Tryptophan synthase alpha chain (268 aa).

Residues Glu-49 and Asp-60 each act as proton acceptor in the active site.

Belongs to the TrpA family. Tetramer of two alpha and two beta chains.

The catalysed reaction is (1S,2R)-1-C-(indol-3-yl)glycerol 3-phosphate + L-serine = D-glyceraldehyde 3-phosphate + L-tryptophan + H2O. It participates in amino-acid biosynthesis; L-tryptophan biosynthesis; L-tryptophan from chorismate: step 5/5. Functionally, the alpha subunit is responsible for the aldol cleavage of indoleglycerol phosphate to indole and glyceraldehyde 3-phosphate. This chain is Tryptophan synthase alpha chain, found in Escherichia coli O1:K1 / APEC.